Reading from the N-terminus, the 66-residue chain is Surface composition regulator (66 aa).

This sequence belongs to the GlgS family.

Functionally, major determinant of cell surface composition. Negatively regulates motility, adhesion and synthesis of biofilm exopolysaccharides. The polypeptide is Surface composition regulator (Shigella flexneri).